Here is a 141-residue protein sequence, read N- to C-terminus: Putative pre-16S rRNA nuclease (141 aa).

Belongs to the YqgF nuclease family.

It is found in the cytoplasm. Could be a nuclease involved in processing of the 5'-end of pre-16S rRNA. The sequence is that of Putative pre-16S rRNA nuclease from Acetivibrio thermocellus (strain ATCC 27405 / DSM 1237 / JCM 9322 / NBRC 103400 / NCIMB 10682 / NRRL B-4536 / VPI 7372) (Clostridium thermocellum).